The chain runs to 497 residues: uncharacterized protein (497 aa).

Positions 474–497 (DPRNPFSNGKPSGWSDEDVAWLKR) are disordered. A compositionally biased stretch (acidic residues) spans 488–497 (SDEDVAWLKR).

This is an uncharacterized protein from Bacillus anthracis.